Here is a 271-residue protein sequence, read N- to C-terminus: Shikimate dehydrogenase-like protein HI_0607 (271 aa).

Lys-67 (proton donor/acceptor) is an active-site residue. Position 103 (Asp-103) interacts with substrate. NADP(+)-binding positions include 126-130 (GSGGM), Lys-154, and Ser-184.

It belongs to the shikimate dehydrogenase-like family. In terms of assembly, homodimer.

The catalysed reaction is shikimate + NADP(+) = 3-dehydroshikimate + NADPH + H(+). In terms of biological role, in vitro, is able to catalyze the NADP(+)-dependent oxidation of shikimate to 3-dehydroshikimate. However, has much lower activity than classical shikimate dehydrogenases AroE, indicating that shikimate may not be the biological substrate. Cannot utilize NAD(+) instead of NADP(+). Is not able to catalyze the oxidation of quinate. This chain is Shikimate dehydrogenase-like protein HI_0607, found in Haemophilus influenzae (strain ATCC 51907 / DSM 11121 / KW20 / Rd).